We begin with the raw amino-acid sequence, 520 residues long: BBSome complex member BBS4 (520 aa).

Positions 1-26 (MAEVKLGMKTQVPASVESQKPRSKKA) are disordered. The interval 1–66 (MAEVKLGMKT…EQLQETQGLC (66 aa)) is required for localization to centrosomes. TPR repeat units lie at residues 67–100 (EYAI…SPQC), 102–134 (DNLK…NQKD), 135–167 (WEIC…LNKH), 168–201 (DLTY…SPEN), 203–235 (ELLT…DPAN), 237–269 (KAIL…IPES), 270–303 (PPLW…APFD), 304–337 (WKIL…QPKM), 339–371 (ELYM…DKCN), and 373–408 (LVNL…LKDN). The interval 101–337 (ADNLKQVARS…SAAINFQPKM (237 aa)) is interaction with PCM1. The required for localization to centrosomes stretch occupies residues 338 to 520 (GELYMLLAVA…TEASEQKKEK (183 aa)). The segment at 488 to 520 (AQLPKPPSLPLEPEPEPTVEASPTEASEQKKEK) is disordered.

The protein belongs to the BBS4 family. As to quaternary structure, part of BBSome complex, that contains BBS1, BBS2, BBS4, BBS5, BBS7, BBS8/TTC8, BBS9 and BBIP10. Interacts with PCM1 and DCTN1. Interacts with DC28B. Interacts with ALDOB and C2CD3. Interacts with PKD1. Interacts with CEP290. Interacts with DLEC1. Expressed in the hippocampus and dentate gyrus, the columnar epithelial cells of bronchioles, the olfactory epithelium and the inner segment and outer nuclear layer of the retina. Expressed in testis.

The protein resides in the cytoplasm. It localises to the cytoskeleton. The protein localises to the microtubule organizing center. It is found in the centrosome. Its subcellular location is the cell projection. The protein resides in the cilium membrane. It localises to the centriolar satellite. The protein localises to the cilium. It is found in the flagellum. In terms of biological role, the BBSome complex is thought to function as a coat complex required for sorting of specific membrane proteins to the primary cilia. The BBSome complex is required for ciliogenesis but is dispensable for centriolar satellite function. This ciliogenic function is mediated in part by the Rab8 GDP/GTP exchange factor, which localizes to the basal body and contacts the BBSome. Rab8(GTP) enters the primary cilium and promotes extension of the ciliary membrane. Firstly the BBSome associates with the ciliary membrane and binds to RAB3IP/Rabin8, the guanosyl exchange factor (GEF) for Rab8 and then the Rab8-GTP localizes to the cilium and promotes docking and fusion of carrier vesicles to the base of the ciliary membrane. The BBSome complex, together with the LTZL1, controls SMO ciliary trafficking and contributes to the sonic hedgehog (SHH) pathway regulation. Required for proper BBSome complex assembly and its ciliary localization. Required for microtubule anchoring at the centrosome but not for microtubule nucleation. May be required for the dynein-mediated transport of pericentriolar proteins to the centrosome. The sequence is that of BBSome complex member BBS4 (Bbs4) from Mus musculus (Mouse).